A 198-amino-acid chain; its full sequence is Pyridoxal 5'-phosphate synthase subunit PdxT (198 aa).

49–51 (GES) lines the L-glutamine pocket. Cys-81 (nucleophile) is an active-site residue. L-glutamine is bound by residues Arg-113 and 141-142 (IR). Catalysis depends on charge relay system residues His-177 and Glu-179.

Belongs to the glutaminase PdxT/SNO family. In the presence of PdxS, forms a dodecamer of heterodimers. Only shows activity in the heterodimer.

The catalysed reaction is aldehydo-D-ribose 5-phosphate + D-glyceraldehyde 3-phosphate + L-glutamine = pyridoxal 5'-phosphate + L-glutamate + phosphate + 3 H2O + H(+). It catalyses the reaction L-glutamine + H2O = L-glutamate + NH4(+). It functions in the pathway cofactor biosynthesis; pyridoxal 5'-phosphate biosynthesis. Functionally, catalyzes the hydrolysis of glutamine to glutamate and ammonia as part of the biosynthesis of pyridoxal 5'-phosphate. The resulting ammonia molecule is channeled to the active site of PdxS. This Mycobacterium leprae (strain TN) protein is Pyridoxal 5'-phosphate synthase subunit PdxT.